Here is a 417-residue protein sequence, read N- to C-terminus: Cyanophycinase (417 aa).

The first 23 residues, 1–23 (MIRSFIRSSALLLALLPVTGYSA), serve as a signal peptide directing secretion. Residues Ser-169, Asp-188, and His-222 each act as charge relay system in the active site.

This sequence belongs to the peptidase S51 family.

It is found in the secreted. The enzyme catalyses [L-4-(L-arginin-2-N-yl)aspartate](n) + H2O = [L-4-(L-arginin-2-N-yl)aspartate](n-1) + L-4-(L-arginin-2-N-yl)aspartate. With respect to regulation, inhibited by serine protease inhibitors. Inhibited by N-Bromo-succinimide. In terms of biological role, exopeptidase that catalyzes the hydrolytic cleavage of multi-L-arginyl-poly-L-aspartic acid (cyanophycin; a water-insoluble reserve polymer) into aspartate-arginine dipeptides. This is Cyanophycinase (cphE) from Pseudomonas anguilliseptica.